Here is a 409-residue protein sequence, read N- to C-terminus: Argininosuccinate synthase (409 aa).

ATP-binding positions include 11–19 and Ala-38; that span reads AYSGGLDTS. Tyr-91 and Ser-96 together coordinate L-citrulline. Gly-121 contacts ATP. Thr-123, Asn-127, and Asp-128 together coordinate L-aspartate. Asn-127 lines the L-citrulline pocket. L-citrulline contacts are provided by Arg-131, Ser-182, Ser-191, Glu-267, and Tyr-279.

It belongs to the argininosuccinate synthase family. Type 1 subfamily. As to quaternary structure, homotetramer.

The protein resides in the cytoplasm. The catalysed reaction is L-citrulline + L-aspartate + ATP = 2-(N(omega)-L-arginino)succinate + AMP + diphosphate + H(+). It participates in amino-acid biosynthesis; L-arginine biosynthesis; L-arginine from L-ornithine and carbamoyl phosphate: step 2/3. The protein is Argininosuccinate synthase of Xanthobacter autotrophicus (strain ATCC BAA-1158 / Py2).